Here is a 657-residue protein sequence, read N- to C-terminus: Methionine--tRNA ligase (657 aa).

Positions 13–23 match the 'HIGH' region motif; the sequence is YYPSGNLHIGH. The short motif at 308-312 is the 'KMSKS' region element; it reads KMSKS. Residue K311 coordinates ATP. In terms of domain architecture, tRNA-binding spans 557-657; it reads DFDKVEIKAA…SAIPNGAVIK (101 aa).

It belongs to the class-I aminoacyl-tRNA synthetase family. MetG type 2B subfamily. As to quaternary structure, homodimer.

It is found in the cytoplasm. It carries out the reaction tRNA(Met) + L-methionine + ATP = L-methionyl-tRNA(Met) + AMP + diphosphate. Is required not only for elongation of protein synthesis but also for the initiation of all mRNA translation through initiator tRNA(fMet) aminoacylation. The sequence is that of Methionine--tRNA ligase from Staphylococcus aureus (strain MW2).